A 291-amino-acid chain; its full sequence is tRNA-uridine aminocarboxypropyltransferase 1 (291 aa).

The segment at 158-181 is disordered; the sequence is KNSAYEPSSKRPKFSPENDKNTYE. The segment covering 171-181 has biased composition (basic and acidic residues); that stretch reads FSPENDKNTYE. The short motif at 199 to 202 is the DXTW element; the sequence is DSTW.

It belongs to the TDD superfamily. DTWD1 family.

The protein resides in the nucleus. The enzyme catalyses a uridine in tRNA + S-adenosyl-L-methionine = a 3-[(3S)-3-amino-3-carboxypropyl]uridine in tRNA + S-methyl-5'-thioadenosine + H(+). Its function is as follows. Catalyzes the formation of 3-(3-amino-3-carboxypropyl)uridine (acp3U) at position 20 in the D-loop of several cytoplasmic tRNAs (acp3U(20)). The polypeptide is tRNA-uridine aminocarboxypropyltransferase 1 (Xenopus laevis (African clawed frog)).